Reading from the N-terminus, the 206-residue chain is Uridine kinase (206 aa).

An ATP-binding site is contributed by 11 to 18 (GGTGSGKS).

This sequence belongs to the uridine kinase family.

Its subcellular location is the cytoplasm. The catalysed reaction is uridine + ATP = UMP + ADP + H(+). It carries out the reaction cytidine + ATP = CMP + ADP + H(+). Its pathway is pyrimidine metabolism; CTP biosynthesis via salvage pathway; CTP from cytidine: step 1/3. It participates in pyrimidine metabolism; UMP biosynthesis via salvage pathway; UMP from uridine: step 1/1. This chain is Uridine kinase, found in Clostridium botulinum (strain 657 / Type Ba4).